Reading from the N-terminus, the 3946-residue chain is Hybrid PKS-NRPS synthetase lepA (3946 aa).

Positions 9–440 constitute a Ketosynthase family 3 (KS3) domain; that stretch reads VEPIAIVGSA…GTNAHVILEG (432 aa). Catalysis depends on for beta-ketoacyl synthase activity residues cysteine 183, histidine 320, and histidine 363. Residues 553-871 form a malonyl-CoA:ACP transacylase (MAT) domain region; sequence IFTGQGAQWA…PYAGIMRRAT (319 aa). The tract at residues 945-1073 is N-terminal hotdog fold; the sequence is HELLGRRAPD…GRLILFKGEG (129 aa). The segment at 945 to 1238 is dehydratase (DH) domain; it reads HELLGRRAPD…RLQSFTEAKA (294 aa). One can recognise a PKS/mFAS DH domain in the interval 945 to 1239; the sequence is HELLGRRAPD…LQSFTEAKAL (295 aa). The active-site Proton acceptor; for dehydratase activity is the histidine 977. Residues 1088-1239 are C-terminal hotdog fold; the sequence is LSPLDREMFY…LQSFTEAKAL (152 aa). Aspartate 1147 (proton donor; for dehydratase activity) is an active-site residue. The interval 1380–1580 is methyltransferase (MT) domain; the sequence is LLNRFYTDGR…ATVSDLPSDG (201 aa). The ketoreductase (KR) domain stretch occupies residues 2093–2266; it reads TYWMIGLNSE…AASVIDIGLV (174 aa). Low complexity predominate over residues 2352-2365; sequence SSQDSDQSNSTSAS. The disordered stretch occupies residues 2352-2372; that stretch reads SSQDSDQSNSTSASIRDQVSS. Positions 2378–2455 constitute a Carrier 1 domain; sequence EGTDVLLRCF…EICAEAIQKF (78 aa). Serine 2415 bears the O-(pantetheine 4'-phosphoryl)serine mark. A disordered region spans residues 2474–2531; sequence KQATASPPEIGREEAQSTSRAGILPTDQDNDNSSDSESQRKSGASSSSGSGTRTPTSI. Low complexity predominate over residues 2508–2530; sequence DSESQRKSGASSSSGSGTRTPTS. A condensation (C) domain region spans residues 2547–2976; the sequence is PMSYAQSRLW…MQIQDGLLND (430 aa). The adenylation (A) (KR) domain stretch occupies residues 3000 to 3402; that stretch reads FSQRAATDAN…GGLIFMGRLD (403 aa). The segment at 3492-3511 is disordered; it reads GKVDRKALQDKPLPTEPDSS. One can recognise a Carrier 2 domain in the interval 3515–3594; sequence EALSLAEGEL…RMATLIDAEK (80 aa). An O-(pantetheine 4'-phosphoryl)serine modification is found at serine 3554. Residues 3633 to 3833 form a reductase (RED) domain region; the sequence is LTGSTGFLGM…RFSVLMKVVP (201 aa).

The protein in the C-terminal section; belongs to the NRP synthetase family.

In terms of biological role, hybrid PKS-NRPS synthetase; part of the gene cluster 23 that mediates the biosynthesis of a family of 2-pyridones known as leporins. The hybrid PKS-NRPS synthetase lepA and the enoyl reductase lepG are responsible for fusion of phenylalanine with a hexaketide and subsequent release of the stable tetramic acid precursor, pre-leporin C. Because lepA lacks a designated enoylreductase (ER) domain, the required activity is provided the enoyl reductase lepG. It is possible that the dehydrogenase lepF also participates in production of pre-leporin C. Cytochrome P450 monooxygenase lepH is then required for the ring expansion step to yield leporin C. Leporin C is then presumably further oxidized by the N-hydroxylase lepD to form leporin B. LepI may possess a function in biosynthesis upstream of lepA. Leporin B is further oxidized in the presence of ferric ion to give the leporin B trimer-iron chelate, but whether or not this reaction is catalyzed by an enzyme in the pathway or by ferric ion is not determined yet. The chain is Hybrid PKS-NRPS synthetase lepA from Aspergillus flavus (strain ATCC 200026 / FGSC A1120 / IAM 13836 / NRRL 3357 / JCM 12722 / SRRC 167).